A 332-amino-acid polypeptide reads, in one-letter code: T-cell leukemia homeobox protein 1 (332 aa).

The homeobox DNA-binding region spans 203-262 (KKKPRTSFTRLQICELEKRFHRQKYLASAERAALAKALKMTDAQVKTWFQNRRTKWRRQT). Position 238 is an N6-acetyllysine (Lys-238).

In terms of tissue distribution, expressed in various embryonic tissues, including branchial arches, some component of the nervous system and spleen.

The protein localises to the nucleus. Its function is as follows. Controls the genesis of the spleen. Binds to the DNA sequence 5'-GGCGGTAAGTGG-3'. The sequence is that of T-cell leukemia homeobox protein 1 (Tlx1) from Mus musculus (Mouse).